The following is a 217-amino-acid chain: Thiamine-phosphate synthase (217 aa).

Residues 39-43 and N71 contribute to the 4-amino-2-methyl-5-(diphosphooxymethyl)pyrimidine site; that span reads QLRRK. 2 residues coordinate Mg(2+): D72 and D91. Residue S110 coordinates 4-amino-2-methyl-5-(diphosphooxymethyl)pyrimidine. Residue 137–139 coordinates 2-[(2R,5Z)-2-carboxy-4-methylthiazol-5(2H)-ylidene]ethyl phosphate; the sequence is SPT. K140 contacts 4-amino-2-methyl-5-(diphosphooxymethyl)pyrimidine. Residues G173 and 193-194 contribute to the 2-[(2R,5Z)-2-carboxy-4-methylthiazol-5(2H)-ylidene]ethyl phosphate site; that span reads IS.

This sequence belongs to the thiamine-phosphate synthase family. Mg(2+) serves as cofactor.

The catalysed reaction is 2-[(2R,5Z)-2-carboxy-4-methylthiazol-5(2H)-ylidene]ethyl phosphate + 4-amino-2-methyl-5-(diphosphooxymethyl)pyrimidine + 2 H(+) = thiamine phosphate + CO2 + diphosphate. It catalyses the reaction 2-(2-carboxy-4-methylthiazol-5-yl)ethyl phosphate + 4-amino-2-methyl-5-(diphosphooxymethyl)pyrimidine + 2 H(+) = thiamine phosphate + CO2 + diphosphate. The enzyme catalyses 4-methyl-5-(2-phosphooxyethyl)-thiazole + 4-amino-2-methyl-5-(diphosphooxymethyl)pyrimidine + H(+) = thiamine phosphate + diphosphate. It participates in cofactor biosynthesis; thiamine diphosphate biosynthesis; thiamine phosphate from 4-amino-2-methyl-5-diphosphomethylpyrimidine and 4-methyl-5-(2-phosphoethyl)-thiazole: step 1/1. Functionally, condenses 4-methyl-5-(beta-hydroxyethyl)thiazole monophosphate (THZ-P) and 2-methyl-4-amino-5-hydroxymethyl pyrimidine pyrophosphate (HMP-PP) to form thiamine monophosphate (TMP). In Bordetella parapertussis (strain 12822 / ATCC BAA-587 / NCTC 13253), this protein is Thiamine-phosphate synthase.